The following is a 431-amino-acid chain: Glutamate-1-semialdehyde 2,1-aminomutase 2 (431 aa).

Lysine 268 is subject to N6-(pyridoxal phosphate)lysine.

Belongs to the class-III pyridoxal-phosphate-dependent aminotransferase family. HemL subfamily. As to quaternary structure, homodimer. Pyridoxal 5'-phosphate is required as a cofactor.

Its subcellular location is the cytoplasm. The catalysed reaction is (S)-4-amino-5-oxopentanoate = 5-aminolevulinate. It participates in porphyrin-containing compound metabolism; protoporphyrin-IX biosynthesis; 5-aminolevulinate from L-glutamyl-tRNA(Glu): step 2/2. The chain is Glutamate-1-semialdehyde 2,1-aminomutase 2 from Anoxybacillus flavithermus (strain DSM 21510 / WK1).